Here is a 1250-residue protein sequence, read N- to C-terminus: Protein SSD1 (1250 aa).

Over residues 1–22 (MSKNSNVNNNRSQEPNNMFVQT) the composition is skewed to polar residues. The tract at residues 1–32 (MSKNSNVNNNRSQEPNNMFVQTTGGGKNAPKQ) is disordered. Position 2 is an N-acetylserine (serine 2). Residue serine 40 is modified to Phosphoserine. Residues 79 to 163 (TGQYLSGNSG…SSIYGHSRRH (85 aa)) are disordered. Over residues 84–94 (SGNSGSNNHFT) the composition is skewed to polar residues. Positions 124–145 (NNSGYYHNSYDNNNNSNNPGSN) are enriched in low complexity. Serine 164 and serine 183 each carry phosphoserine. The segment covering 197–208 (QADSGSNSTTEQ) has biased composition (polar residues). Disordered regions lie at residues 197 to 338 (QADS…GGRK), 418 to 443 (KEKEEKKRRKDASMQHDLIPLNSSDD), and 455 to 517 (SNNF…DDVE). Threonine 227 is subject to Phosphothreonine. Positions 264 to 276 (NEYSPGINSNWRN) are enriched in polar residues. The span at 277 to 287 (QSQQPQQQLSP) shows a compositional bias: low complexity. Serine 286 and serine 322 each carry phosphoserine. Polar residues predominate over residues 319–329 (SNSSVHSFSSQ). A compositionally biased stretch (polar residues) spans 481–495 (STINNDSDSLSSPTK). Residues serine 491 and serine 492 each carry the phosphoserine modification. Over residues 497–510 (GVRRRSSLKQRPTQ) the composition is skewed to basic residues. Residues 582-657 (AWFKPTDKKV…EIDSILRDNN (76 aa)) form the CSD2 domain. Tyrosine 688 carries the phosphotyrosine modification. An RNB domain is found at 694–1015 (DTNEYNIFAI…VHRQLKAVIH (322 aa)). Residues 1064-1148 (GQLLTMATVL…SIKNKFRSTA (85 aa)) enclose the DIS3L2 C-terminal domain.

This sequence belongs to the RNR ribonuclease family.

Its function is as follows. Can suppress the lethality due to deletion of SIT4, and partially the defects due to BCY1 disruption. Is implicated in the control of the cell cycle G1 phase. The protein is Protein SSD1 (SSD1) of Saccharomyces cerevisiae (strain ATCC 204508 / S288c) (Baker's yeast).